A 636-amino-acid polypeptide reads, in one-letter code: MLSLLLVLTTLARIHAHYTSGDVVYHTMPHFWTGVGFCPAGRIDHEGISAALGDPALRLNLRLIAALPVGAVTHIRIHWLLELIQFWQYDPSGIPIYDFSKFDDFIDFLHEELRLSPVLEWMGNLGGVFSENPMQQSFYWEHLVKTTINHQIARHGSSRLVNWRYETWNEPDLRGYNKQNFTAHTFLDYVQAVRRGLSKAGNLDNQDGKVPLPMYRSLRGPAGLFKDSNHPLCWNLLELCSQRVVYCPIDILTFHRKGIEGTATEIVNGSLSLMAKIYEEYPNLKQLPVANDEADPVAGWSTSRDFQADVRYGITLISTVMQFWHAKLAGGPLSRLESISHDNAFLSYHPHEFTQRTLLAHFRMNETKPPHSQLVQKPVYAALGMLAKLGTRAADVEMVNMDTKHSVQVLRTVSGGLGGPGQYMATIFLSPEEAGPKMTAFHHKYTLNMSIANESAFVTELLVPKETDPYYIWQQAGSPAYPNATLREAMRRAQAPRLYKTGPIWQYNSELVINSASIPLPWAMLLRVCSASWPKLRRPQQLSIAEVTQREVFISWMEHPKSTQCLLSYEVWFKERDNLGRSADWMLISQGWHLPYPSFQYAPGDKGSVNGFYKVRGVDVFNETSPYSQIVEYLEL.

The first 16 residues, methionine 1–alanine 16, serve as a signal peptide directing secretion. Residues proline 39, isoleucine 43, and histidine 45 each coordinate alpha-D-mannopyranose. Positions 78, 169, and 170 each coordinate alpha-L-iduronate. Glutamate 170 acts as the Proton donor in catalysis. N-linked (GlcNAc...) asparagine glycosylation occurs at asparagine 180. Residue lysine 257 participates in alpha-L-iduronate binding. N-linked (GlcNAc...) asparagine glycosylation is present at asparagine 268. The alpha-L-iduronate site is built by glutamate 293 and glycine 299. Glutamate 293 (nucleophile) is an active-site residue. Tryptophan 300 is a binding site for alpha-D-mannopyranose. Residues aspartate 342 and arginine 356 each coordinate alpha-L-iduronate. Asparagine 365, asparagine 448, asparagine 453, and asparagine 483 each carry an N-linked (GlcNAc...) asparagine glycan. Cysteine 529 and cysteine 565 are joined by a disulfide. Asparagine 622 is a glycosylation site (N-linked (GlcNAc...) asparagine).

Belongs to the glycosyl hydrolase 39 family.

It is found in the lysosome. It carries out the reaction Hydrolysis of unsulfated alpha-L-iduronosidic linkages in dermatan sulfate.. In terms of biological role, essential lysosomal hydrolase responsible for the degradation of glycosaminoglycans (GAG) such as heparan sulfate. Required for lysosome function and autophagy. Consequently, has an essential role in the development, maintenance and function of various cells, tissues, and organs, including the muscles and the central nervous system (CNS). The polypeptide is Alpha-L-iduronidase (Drosophila melanogaster (Fruit fly)).